The following is a 290-amino-acid chain: MRIADYSVTRAILERHGFTFKKSFGQNFLTDTNILQKIVDTAEIDKNVNVIEIGPGIGALTEFLAENAAEVMAFEIDDRLVPILADTLRDFDNVTVVNQDILKVDLAQYIAEFKNPDLPIKVVANLPYYITTPILMHLIESGIPFSEFVVMMQKEVADRISAQPNTKAYGSLSIAVQYYMTAKVAFIVPRTVFVPAPNVDSAILKMVRREQPAVEVQDEKFFFKVTKASFVHRRKTLWNNLTSYFGKSEEVKEKLENALAKANLVANVRGEALDLVAFARLSDALKSEGL.

S-adenosyl-L-methionine contacts are provided by Asn27, Leu29, Gly54, Glu75, Asp100, and Asn125.

The protein belongs to the class I-like SAM-binding methyltransferase superfamily. rRNA adenine N(6)-methyltransferase family. RsmA subfamily.

It is found in the cytoplasm. The enzyme catalyses adenosine(1518)/adenosine(1519) in 16S rRNA + 4 S-adenosyl-L-methionine = N(6)-dimethyladenosine(1518)/N(6)-dimethyladenosine(1519) in 16S rRNA + 4 S-adenosyl-L-homocysteine + 4 H(+). In terms of biological role, specifically dimethylates two adjacent adenosines (A1518 and A1519) in the loop of a conserved hairpin near the 3'-end of 16S rRNA in the 30S particle. May play a critical role in biogenesis of 30S subunits. The chain is Ribosomal RNA small subunit methyltransferase A from Streptococcus gordonii (strain Challis / ATCC 35105 / BCRC 15272 / CH1 / DL1 / V288).